Here is a 333-residue protein sequence, read N- to C-terminus: Glycerol-3-phosphate dehydrogenase [NAD(P)+] (333 aa).

Residues Ser-10, Trp-11, His-31, Arg-32, and Lys-105 each contribute to the NADPH site. Residues Lys-105, Gly-136, and Ser-138 each contribute to the sn-glycerol 3-phosphate site. Ala-140 lines the NADPH pocket. Residues Lys-191, Asp-244, Ser-254, Arg-255, and Asn-256 each coordinate sn-glycerol 3-phosphate. Lys-191 (proton acceptor) is an active-site residue. Arg-255 provides a ligand contact to NADPH. Residues Ile-279 and Glu-281 each contribute to the NADPH site.

The protein belongs to the NAD-dependent glycerol-3-phosphate dehydrogenase family.

It is found in the cytoplasm. The catalysed reaction is sn-glycerol 3-phosphate + NAD(+) = dihydroxyacetone phosphate + NADH + H(+). It carries out the reaction sn-glycerol 3-phosphate + NADP(+) = dihydroxyacetone phosphate + NADPH + H(+). It participates in membrane lipid metabolism; glycerophospholipid metabolism. In terms of biological role, catalyzes the reduction of the glycolytic intermediate dihydroxyacetone phosphate (DHAP) to sn-glycerol 3-phosphate (G3P), the key precursor for phospholipid synthesis. The protein is Glycerol-3-phosphate dehydrogenase [NAD(P)+] of Pelodictyon phaeoclathratiforme (strain DSM 5477 / BU-1).